The sequence spans 87 residues: Elastase inhibitor AFLEI (87 aa).

The first 19 residues, 1-19 (MKFSLACLLALAGLQAALA), serve as a signal peptide directing secretion. Residues Cys-24 and Cys-86 are joined by a disulfide bond.

It is found in the secreted. In terms of biological role, elastase inhibitor. In Aspergillus fumigatus (strain CBS 144.89 / FGSC A1163 / CEA10) (Neosartorya fumigata), this protein is Elastase inhibitor AFLEI.